A 274-amino-acid polypeptide reads, in one-letter code: 4-diphosphocytidyl-2-C-methyl-D-erythritol kinase (274 aa).

Lys-7 is an active-site residue. Position 90–100 (90–100) interacts with ATP; it reads PMGGGLGGGSS. Asp-132 is an active-site residue.

Belongs to the GHMP kinase family. IspE subfamily.

The catalysed reaction is 4-CDP-2-C-methyl-D-erythritol + ATP = 4-CDP-2-C-methyl-D-erythritol 2-phosphate + ADP + H(+). It functions in the pathway isoprenoid biosynthesis; isopentenyl diphosphate biosynthesis via DXP pathway; isopentenyl diphosphate from 1-deoxy-D-xylulose 5-phosphate: step 3/6. Catalyzes the phosphorylation of the position 2 hydroxy group of 4-diphosphocytidyl-2C-methyl-D-erythritol. The polypeptide is 4-diphosphocytidyl-2-C-methyl-D-erythritol kinase (Dechloromonas aromatica (strain RCB)).